A 153-amino-acid chain; its full sequence is Histone deacetylase complex subunit SAP18 (153 aa).

Residues 1–20 form a disordered region; the sequence is MAVESRVTQEEIKKEPEKPI. A2 carries the post-translational modification N-acetylalanine. Positions 7-20 are enriched in basic and acidic residues; sequence VTQEEIKKEPEKPI. K13 participates in a covalent cross-link: Glycyl lysine isopeptide (Lys-Gly) (interchain with G-Cter in SUMO2). Residues 93–153 are involved in splicing regulation activity; the sequence is FMDLKRPGYR…PPSSGRMRPY (61 aa).

The protein belongs to the SAP18 family. In terms of assembly, found in a mRNA splicing-dependent exon junction complex (EJC). Component of the heterotrimeric ASAP (apoptosis- and splicing-associated protein) and PSAP complexes consisting of RNPS1, SAP18 and either ACIN1 or PNN, respectively; the ASAP and PSAP complexes probably are formed mutually exclusive. For the ASAP complex, the association of SAP18 seems to require a preformed RNPS1:ACIN1 complex. Forms a complex with SIN3A and HDAC1. Interacts with SUFU. Expressed in all tissues tested; highest levels in the brain, kidney and muscle; lowest levels in lung spleen, liver, intestine and testis, and moderate levels in salivary gland and heart.

It localises to the nucleus. The protein localises to the cytoplasm. The protein resides in the nucleus speckle. Its function is as follows. Component of the SIN3-repressing complex. Enhances the ability of SIN3-HDAC1-mediated transcriptional repression. When tethered to the promoter, it can direct the formation of a repressive complex to core histone proteins. Auxiliary component of the splicing-dependent multiprotein exon junction complex (EJC) deposited at splice junction on mRNAs. The EJC is a dynamic structure consisting of core proteins and several peripheral nuclear and cytoplasmic associated factors that join the complex only transiently either during EJC assembly or during subsequent mRNA metabolism. Component of the ASAP and PSAP complexes which bind RNA in a sequence-independent manner and are proposed to be recruited to the EJC prior to or during the splicing process and to regulate specific excision of introns in specific transcription subsets. The ASAP complex can inhibit mRNA processing during in vitro splicing reactions. The ASAP complex promotes apoptosis and is disassembled after induction of apoptosis. Involved in the splicing modulation of BCL2L1/Bcl-X (and probably other apoptotic genes); specifically inhibits the formation of proapoptotic isoforms such as Bcl-X(S); the activity is different from the established EJC assembly and function. The sequence is that of Histone deacetylase complex subunit SAP18 (Sap18) from Mus musculus (Mouse).